The sequence spans 306 residues: Methyl-CpG-binding domain-containing protein 7 (306 aa).

Polar residues predominate over residues 1–11 (MQTRSSSSPSA). The interval 1 to 21 (MQTRSSSSPSANHRRETQLQI) is disordered. MBD domains are found at residues 21 to 92 (IADP…QDKT), 106 to 171 (GVEY…RVLQ), and 172 to 242 (NRRG…ERLP). Residues Arg118, Arg145, and Arg174 each carry the asymmetric dimethylarginine modification. A required for interaction with PRMT11 region spans residues 163–306 (IEQQLRVLQN…AFVSLIEDRS (144 aa)).

Interacts with PRMT11. Interacts (via C-terminus) with IDM2, but not with IDM1. Interacts with IDM3. Part of a complex made of MBD7, IDM1, IDM2 and IDM3. In terms of processing, methylated by PRMT11. In terms of tissue distribution, expressed in leaves, buds, flowers, stems, siliques, mature seeds and roots.

The protein resides in the nucleus. Its subcellular location is the chromosome. Transcriptional regulator that binds CpG islands in promoters where the DNA is methylated at position 5 of cytosine within CpG dinucleotides. May directly affect chromatin structure by inducing intra- and inter- chromatin compaction via bridging over multiple methylated CpG sites. Acts as an anti-silencing factor that prevents DNA hypermethylation and gene repression. Requires high mCG density for binding. Recognizes preferentially mCGs located in transposable elements. Required for active DNA demethylation. Prefers to target genomic loci around chromocenters. This Arabidopsis thaliana (Mouse-ear cress) protein is Methyl-CpG-binding domain-containing protein 7.